Here is a 356-residue protein sequence, read N- to C-terminus: N-acyl-phosphatidylethanolamine-hydrolyzing phospholipase D 1 (356 aa).

Zn(2+)-binding residues include His144 and His146. Tyr147 is an an N-acyl-1,2-diacyl-sn-glycero-3-phosphoethanolamine binding site. Zn(2+) contacts are provided by Asp148, His149, His217, and Asp248. His286 is a binding site for an N-acyl-1,2-diacyl-sn-glycero-3-phosphoethanolamine. His308 contributes to the Zn(2+) binding site.

It belongs to the NAPE-PLD family. It depends on Zn(2+) as a cofactor. In terms of tissue distribution, expressed in interneurons that are in close proximity to the primary sensory neurons. Predominantly expressed in the pharynx but can also be found in cell bodies of the dorsal and ventral nerve cords.

The catalysed reaction is an N-acyl-1,2-diacyl-sn-glycero-3-phosphoethanolamine + H2O = an N-acylethanolamine + a 1,2-diacyl-sn-glycero-3-phosphate + H(+). It catalyses the reaction 1,2-dihexadecanoyl-sn-glycero-3-phospho-(N-hexadecanoyl)-ethanolamine + H2O = 1,2-dihexadecanoyl-sn-glycero-3-phosphate + N-hexadecanoylethanolamine + H(+). The enzyme catalyses N-(5Z,8Z,11Z,14Z-eicosatetraenoyl)-1,2-di-(9Z-octadecenoyl)-sn-glycero-3-phosphoethanolamine + H2O = N-(5Z,8Z,11Z,14Z-eicosatetraenoyl)-ethanolamine + 1,2-di-(9Z-octadecenoyl)-sn-glycero-3-phosphate + H(+). Its function is as follows. D-type phospholipase that hydrolyzes N-acyl-phosphatidylethanolamines (NAPEs) to produce bioactive N-acylethanolamines/fatty acid ethanolamides (NAEs/FAEs) and phosphatidic acid. NAEs are bioactive lipids that are involved in diverse physiological processes such as growth and lifespan. The polypeptide is N-acyl-phosphatidylethanolamine-hydrolyzing phospholipase D 1 (Caenorhabditis elegans).